The following is a 406-amino-acid chain: 3-phosphoshikimate 1-carboxyvinyltransferase (406 aa).

3 residues coordinate 3-phosphoshikimate: Lys20, Ser21, and Arg25. Lys20 provides a ligand contact to phosphoenolpyruvate. Positions 84 and 112 each coordinate phosphoenolpyruvate. 3-phosphoshikimate contacts are provided by Ser155, Ser156, Gln157, Asp295, Gln317, and Lys321. Gln157 contacts phosphoenolpyruvate. Asp295 (proton acceptor) is an active-site residue. Arg325, Arg366, and Lys392 together coordinate phosphoenolpyruvate.

The protein belongs to the EPSP synthase family. Monomer.

It localises to the cytoplasm. It catalyses the reaction 3-phosphoshikimate + phosphoenolpyruvate = 5-O-(1-carboxyvinyl)-3-phosphoshikimate + phosphate. The protein operates within metabolic intermediate biosynthesis; chorismate biosynthesis. In terms of biological role, catalyzes the transfer of the enolpyruvyl moiety of phosphoenolpyruvate (PEP) to the 5-hydroxyl of shikimate-3-phosphate (S3P) to produce enolpyruvyl shikimate-3-phosphate and inorganic phosphate. This chain is 3-phosphoshikimate 1-carboxyvinyltransferase, found in Pyrococcus furiosus (strain ATCC 43587 / DSM 3638 / JCM 8422 / Vc1).